The following is a 796-amino-acid chain: Leucine--tRNA ligase (796 aa).

The short motif at 40-51 (PYPSASGLHVGH) is the 'HIGH' region element. The 'KMSKS' region signature appears at 569 to 573 (KMSKS). Lys572 contributes to the ATP binding site.

This sequence belongs to the class-I aminoacyl-tRNA synthetase family.

The protein localises to the cytoplasm. It catalyses the reaction tRNA(Leu) + L-leucine + ATP = L-leucyl-tRNA(Leu) + AMP + diphosphate. In Bdellovibrio bacteriovorus (strain ATCC 15356 / DSM 50701 / NCIMB 9529 / HD100), this protein is Leucine--tRNA ligase.